The primary structure comprises 194 residues: 13S globulin basic chain (194 aa).

Positions Glu13–Glu162 constitute a Cupin type-1 domain.

The protein belongs to the 11S seed storage protein (globulins) family. Hexamer; each subunit is composed of an acidic and a basic chain derived from a single precursor and linked by a disulfide bond. Cotyledons and endosperm protein bodies.

Functionally, seed storage protein with a relatively high level of Lys and Met. The chain is 13S globulin basic chain from Fagopyrum esculentum (Common buckwheat).